The sequence spans 239 residues: Uracil-DNA glycosylase (239 aa).

Asp-65 functions as the Proton acceptor in the catalytic mechanism.

The protein belongs to the uracil-DNA glycosylase (UDG) superfamily. UNG family.

The protein localises to the cytoplasm. The enzyme catalyses Hydrolyzes single-stranded DNA or mismatched double-stranded DNA and polynucleotides, releasing free uracil.. Its function is as follows. Excises uracil residues from the DNA which can arise as a result of misincorporation of dUMP residues by DNA polymerase or due to deamination of cytosine. This Levilactobacillus brevis (strain ATCC 367 / BCRC 12310 / CIP 105137 / JCM 1170 / LMG 11437 / NCIMB 947 / NCTC 947) (Lactobacillus brevis) protein is Uracil-DNA glycosylase.